The following is a 429-amino-acid chain: Enolase (429 aa).

(2R)-2-phosphoglycerate is bound at residue Gln163. The active-site Proton donor is the Glu205. Mg(2+) contacts are provided by Asp242, Glu287, and Asp314. Residues Lys339, Arg368, Ser369, and Lys390 each contribute to the (2R)-2-phosphoglycerate site. Lys339 serves as the catalytic Proton acceptor.

The protein belongs to the enolase family. Mg(2+) is required as a cofactor.

The protein localises to the cytoplasm. It localises to the secreted. The protein resides in the cell surface. The enzyme catalyses (2R)-2-phosphoglycerate = phosphoenolpyruvate + H2O. It participates in carbohydrate degradation; glycolysis; pyruvate from D-glyceraldehyde 3-phosphate: step 4/5. Its function is as follows. Catalyzes the reversible conversion of 2-phosphoglycerate (2-PG) into phosphoenolpyruvate (PEP). It is essential for the degradation of carbohydrates via glycolysis. The chain is Enolase from Anaeromyxobacter dehalogenans (strain 2CP-1 / ATCC BAA-258).